Reading from the N-terminus, the 223-residue chain is Large ribosomal subunit protein uL4 (223 aa).

The tract at residues 49–106 is disordered; it reads AAARQGTHSTKTRGEVSGGGRKPYRQKGTGRARQGSTRAPQFTGGGVVHGPKPRDYSQ.

Belongs to the universal ribosomal protein uL4 family. Part of the 50S ribosomal subunit.

Its function is as follows. One of the primary rRNA binding proteins, this protein initially binds near the 5'-end of the 23S rRNA. It is important during the early stages of 50S assembly. It makes multiple contacts with different domains of the 23S rRNA in the assembled 50S subunit and ribosome. In terms of biological role, forms part of the polypeptide exit tunnel. The protein is Large ribosomal subunit protein uL4 of Mycobacterium bovis (strain ATCC BAA-935 / AF2122/97).